Consider the following 428-residue polypeptide: Serine--tRNA ligase (428 aa).

231–233 contributes to the L-serine binding site; it reads TSE. Residues 262–264 and V278 each bind ATP; that span reads RRE. E285 contacts L-serine. 349–352 provides a ligand contact to ATP; it reads ELTS. Residue T384 coordinates L-serine.

It belongs to the class-II aminoacyl-tRNA synthetase family. Type-1 seryl-tRNA synthetase subfamily. In terms of assembly, homodimer. The tRNA molecule binds across the dimer.

Its subcellular location is the cytoplasm. The enzyme catalyses tRNA(Ser) + L-serine + ATP = L-seryl-tRNA(Ser) + AMP + diphosphate + H(+). It carries out the reaction tRNA(Sec) + L-serine + ATP = L-seryl-tRNA(Sec) + AMP + diphosphate + H(+). It functions in the pathway aminoacyl-tRNA biosynthesis; selenocysteinyl-tRNA(Sec) biosynthesis; L-seryl-tRNA(Sec) from L-serine and tRNA(Sec): step 1/1. Functionally, catalyzes the attachment of serine to tRNA(Ser). Is also able to aminoacylate tRNA(Sec) with serine, to form the misacylated tRNA L-seryl-tRNA(Sec), which will be further converted into selenocysteinyl-tRNA(Sec). The chain is Serine--tRNA ligase from Bifidobacterium longum (strain NCC 2705).